Here is a 191-residue protein sequence, read N- to C-terminus: Signal peptidase IB (191 aa).

Residues 1-7 (MKKELLE) are Cytoplasmic-facing. Residues 8 to 28 (WIISIAVAFVILFIVGKFIVT) traverse the membrane as a helical segment. The Extracellular portion of the chain corresponds to 29–191 (PYTIKGESMD…HNFNPENTKN (163 aa)). Active-site residues include S36 and K77.

Belongs to the peptidase S26 family.

Its subcellular location is the cell membrane. It carries out the reaction Cleavage of hydrophobic, N-terminal signal or leader sequences from secreted and periplasmic proteins.. Its function is as follows. Essential for cell viability. The sequence is that of Signal peptidase IB (spsB) from Staphylococcus aureus (strain Mu50 / ATCC 700699).